The chain runs to 436 residues: MTVYHFVGIKGTGMSSLAQILHDMKHTVQGSDYEKRFFTQTALEKRSISILPFDKNNVEEGQVIIAGNAFPDTHEEIVAAKELNIPVHRYHHFLGDLMSQYTSVAVTGAHGKTSTTGLLAHVMQGAHPTSYLIGDGTGHGVENSKYFVFEACEYRRHFLSYNPDYAIMTNIDFDHPDYFADINDVFSAFQEMALQVKKGIIACGDDEELQKIQAKVPVIFYGFGEDNDFQARNIQKRTDGTIFDVFVRNTYYDTFKITGYGNHSVLNALAVIALCHYENVDVEAVKHQLTTFEGVKRRFNEKPMGEQVIIDDYAHHPTEINATIEAARQKHPEREIVAVFQPHTFSRTEKFLDEFAESLSKADQVYLCDIFGSARENKGELTIEDLQKRIDGAELITDTTTDVLKKHKNGVLIFMGAGDIQKFEAAYVKEVQVAEK.

108–114 lines the ATP pocket; that stretch reads GAHGKTS.

This sequence belongs to the MurCDEF family.

It is found in the cytoplasm. It carries out the reaction UDP-N-acetyl-alpha-D-muramate + L-alanine + ATP = UDP-N-acetyl-alpha-D-muramoyl-L-alanine + ADP + phosphate + H(+). It participates in cell wall biogenesis; peptidoglycan biosynthesis. Cell wall formation. The chain is UDP-N-acetylmuramate--L-alanine ligase from Bacillus cereus (strain B4264).